Reading from the N-terminus, the 447-residue chain is Elongation factor 1-alpha (447 aa).

Residues Lys-5–Ser-230 form the tr-type G domain. A G1 region spans residues Gly-14–Ser-21. Gly-14–Ser-21 is a GTP binding site. Lys-55 carries the N6,N6-dimethyllysine modification. The G2 stretch occupies residues Gly-70–Asp-74. Lys-79 carries the post-translational modification N6,N6,N6-trimethyllysine. Residues Asp-91 to Gly-94 form a G3 region. Residues Asp-91–His-95 and Asn-153–Asp-156 contribute to the GTP site. Positions Asn-153–Asp-156 are G4. The residue at position 187 (Lys-187) is an N6,N6,N6-trimethyllysine. The G5 stretch occupies residues Ser-194–Phe-196. Lys-261 carries the N6-methyllysine modification. The residue at position 289 (Glu-289) is a 5-glutamyl glycerylphosphorylethanolamine. At Lys-306 the chain carries N6,N6,N6-trimethyllysine. Glu-362 is subject to 5-glutamyl glycerylphosphorylethanolamine. Lys-396 is modified (N6,N6,N6-trimethyllysine).

This sequence belongs to the TRAFAC class translation factor GTPase superfamily. Classic translation factor GTPase family. EF-Tu/EF-1A subfamily.

Its subcellular location is the cytoplasm. Its function is as follows. This protein promotes the GTP-dependent binding of aminoacyl-tRNA to the A-site of ribosomes during protein biosynthesis. The polypeptide is Elongation factor 1-alpha (Pisum sativum (Garden pea)).